A 197-amino-acid polypeptide reads, in one-letter code: Potassium-transporting ATPase KdpC subunit (197 aa).

The helical transmembrane segment at 9-29 (LVVTLLLAALLCGAYPVLVTG) threads the bilayer.

The protein belongs to the KdpC family. The system is composed of three essential subunits: KdpA, KdpB and KdpC.

Its subcellular location is the cell inner membrane. Functionally, part of the high-affinity ATP-driven potassium transport (or Kdp) system, which catalyzes the hydrolysis of ATP coupled with the electrogenic transport of potassium into the cytoplasm. This subunit acts as a catalytic chaperone that increases the ATP-binding affinity of the ATP-hydrolyzing subunit KdpB by the formation of a transient KdpB/KdpC/ATP ternary complex. This Nitratidesulfovibrio vulgaris (strain DSM 19637 / Miyazaki F) (Desulfovibrio vulgaris) protein is Potassium-transporting ATPase KdpC subunit.